The following is a 360-amino-acid chain: Photosystem II protein D1 (360 aa).

3 helical membrane-spanning segments follow: residues 30-47 (YVGWFGVLMIPCLLAAAI), 119-134 (HFLIGICGWMGRQWEL), and 143-157 (WICVAYSAPVSAAFA). H119 contributes to the chlorophyll a binding site. W127 contributes to the pheophytin a binding site. Residues D171 and E190 each contribute to the [CaMn4O5] cluster site. The helical transmembrane segment at 198–219 (FHMAGVAGMFGGSLFSAMHGSL) threads the bilayer. H199 provides a ligand contact to chlorophyll a. A quinone is bound by residues H216 and 265 to 266 (SF). Position 216 (H216) interacts with Fe cation. H273 serves as a coordination point for Fe cation. A helical membrane pass occupies residues 275–289 (FLAIFPVVCVWLTSM). [CaMn4O5] cluster-binding residues include H333, E334, D343, and A345. The propeptide occupies 346 to 360 (AAESTSVALVAPSIG).

Belongs to the reaction center PufL/M/PsbA/D family. As to quaternary structure, PSII is composed of 1 copy each of membrane proteins PsbA, PsbB, PsbC, PsbD, PsbE, PsbF, PsbH, PsbI, PsbJ, PsbK, PsbL, PsbM, PsbT, PsbX, PsbY, Psb30/Ycf12, peripheral proteins PsbO, CyanoQ (PsbQ), PsbU, PsbV and a large number of cofactors. It forms dimeric complexes. The D1/D2 heterodimer binds P680, chlorophylls that are the primary electron donor of PSII, and subsequent electron acceptors. It shares a non-heme iron and each subunit binds pheophytin, quinone, additional chlorophylls, carotenoids and lipids. D1 provides most of the ligands for the Mn4-Ca-O5 cluster of the oxygen-evolving complex (OEC). There is also a Cl(-1) ion associated with D1 and D2, which is required for oxygen evolution. The PSII complex binds additional chlorophylls, carotenoids and specific lipids. serves as cofactor. Tyr-162 forms a radical intermediate that is referred to as redox-active TyrZ, YZ or Y-Z. Post-translationally, C-terminally processed by CtpA; processing is essential to allow assembly of the oxygen-evolving complex and thus photosynthetic growth.

It is found in the cellular thylakoid membrane. It catalyses the reaction 2 a plastoquinone + 4 hnu + 2 H2O = 2 a plastoquinol + O2. In terms of biological role, photosystem II (PSII) is a light-driven water:plastoquinone oxidoreductase that uses light energy to abstract electrons from H(2)O, generating O(2) and a proton gradient subsequently used for ATP formation. It consists of a core antenna complex that captures photons, and an electron transfer chain that converts photonic excitation into a charge separation. The D1/D2 (PsbA/PsbD) reaction center heterodimer binds P680, the primary electron donor of PSII as well as several subsequent electron acceptors. In Prochlorococcus marinus (strain SARG / CCMP1375 / SS120), this protein is Photosystem II protein D1.